A 294-amino-acid polypeptide reads, in one-letter code: 1D-myo-inositol 2-acetamido-2-deoxy-alpha-D-glucopyranoside deacetylase (294 aa).

Positions 13, 16, and 148 each coordinate Zn(2+).

It belongs to the MshB deacetylase family. Zn(2+) is required as a cofactor.

The enzyme catalyses 1D-myo-inositol 2-acetamido-2-deoxy-alpha-D-glucopyranoside + H2O = 1D-myo-inositol 2-amino-2-deoxy-alpha-D-glucopyranoside + acetate. Catalyzes the deacetylation of 1D-myo-inositol 2-acetamido-2-deoxy-alpha-D-glucopyranoside (GlcNAc-Ins) in the mycothiol biosynthesis pathway. In Geodermatophilus obscurus (strain ATCC 25078 / DSM 43160 / JCM 3152 / CCUG 61914 / KCC A-0152 / KCTC 9177 / NBRC 13315 / NRRL B-3577 / G-20), this protein is 1D-myo-inositol 2-acetamido-2-deoxy-alpha-D-glucopyranoside deacetylase.